Here is a 562-residue protein sequence, read N- to C-terminus: Solute carrier family 40 member 1 (562 aa).

The Cytoplasmic portion of the chain corresponds to 1–20 (MDSPASKKPRCERFREFFKS). A helical membrane pass occupies residues 21–50 (AKFLIYVGHALSTWGDRMWNFAVAVFLVEL). Asp36 lines the Fe cation pocket. The Extracellular segment spans residues 51-54 (YGNS). A helical transmembrane segment spans residues 55 to 81 (LLLTAVYGLVVAGSVLLLGAIIGDWVD). The Cytoplasmic segment spans residues 82–84 (KNP). A helical transmembrane segment spans residues 85-115 (RLKVAQTSLVVQNSAVILCGALLMAVFQFKQ). Residues 116 to 123 (QLSSMYDG) are Extracellular-facing. Residues 124 to 159 (WLLTTCYIMVISIANIANLASTAMSITIQRDWVVVV) traverse the membrane as a helical segment. The Cytoplasmic segment spans residues 160-161 (AG). The helical transmembrane segment at 162–192 (DDRSKLADMNATVRIIDQLTNILAPMLVGQI) threads the bilayer. The Extracellular segment spans residues 193–199 (MAFGSHF). The helical transmembrane segment at 200–226 (IGCGFISGWNLFSMCLEYFLLWKVYQK) threads the bilayer. Over 227–300 (TPALAFKAGQ…DGWVAYYNQS (74 aa)) the chain is Cytoplasmic. The helical transmembrane segment at 301-327 (IFFAGMSLAFLYMTVLGFDCITTGYAY) threads the bilayer. Cys320 is a binding site for Fe cation. The Extracellular portion of the chain corresponds to 328–332 (TQGLN). A helical membrane pass occupies residues 333–360 (GSVLSLLMGASAVSGICGTVAFTWIRKK). Over 361 to 362 (CG) the chain is Cytoplasmic. Residues 363-385 (LIRTGFIAGVTQLSCLTLCVASV) form a helical membrane-spanning segment. Residues 386–444 (FAPGSPFDLSVSPFEEVLRHLFGDSGSLRESPTFIPTTEPPIQANVTVFEEAPPVESYM) lie on the Extracellular side of the membrane. The chain crosses the membrane as a helical span at residues 445 to 474 (SVGLLFAGVIAARVGLWSFDLTVTQLIQEN). The Cytoplasmic portion of the chain corresponds to 475 to 479 (VIESE). The chain crosses the membrane as a helical span at residues 480–504 (RGVINGVQNSMNYLLDLLHFIMVIL). His498 serves as a coordination point for Fe cation. The Extracellular segment spans residues 505 to 507 (APN). A helical transmembrane segment spans residues 508–533 (PEAFGLLVIISVSFVAMGHMMYFRFA). At 534-562 (YKSLGSRLFLFCSPEQKPDPNIPSLPNSV) the chain is on the cytoplasmic side.

It belongs to the ferroportin (FP) (TC 2.A.100) family. SLC40A subfamily. Expressed in the yolk sac and placenta.

The protein localises to the cell membrane. Its subcellular location is the basolateral cell membrane. It catalyses the reaction Fe(2+)(in) = Fe(2+)(out). Its function is as follows. Transports Fe(2+) from the inside of a cell to the outside of the cell, playing a key role for maintaining systemic iron homeostasis. May be involved in transfer of Fe(2+) between maternal and fetal circulation. This Danio rerio (Zebrafish) protein is Solute carrier family 40 member 1 (slc40a1).